The following is a 124-amino-acid chain: Small ribosomal subunit protein uS12 (124 aa).

The disordered stretch occupies residues Met-1–Ala-23. A 3-methylthioaspartic acid modification is found at Asp-89. The segment at Asp-103–Gly-124 is disordered. The span at Gly-113–Gly-124 shows a compositional bias: basic residues.

This sequence belongs to the universal ribosomal protein uS12 family. Part of the 30S ribosomal subunit. Contacts proteins S8 and S17. May interact with IF1 in the 30S initiation complex.

In terms of biological role, with S4 and S5 plays an important role in translational accuracy. Interacts with and stabilizes bases of the 16S rRNA that are involved in tRNA selection in the A site and with the mRNA backbone. Located at the interface of the 30S and 50S subunits, it traverses the body of the 30S subunit contacting proteins on the other side and probably holding the rRNA structure together. The combined cluster of proteins S8, S12 and S17 appears to hold together the shoulder and platform of the 30S subunit. The chain is Small ribosomal subunit protein uS12 from Nitrosococcus oceani (strain ATCC 19707 / BCRC 17464 / JCM 30415 / NCIMB 11848 / C-107).